Consider the following 302-residue polypeptide: MSAVKAARYGKDNVRVYKVHKDEKTGVQTVYEMTVCVLLEGEIETSYTKADNSVIVATDSIKNTIYITAKQNPVTPPELFGSILGTHFIEKYNHIHAAHVNIVCHRWTRMDIDGKPHPHSFIRDSEEKRNVQVDVVEGKGIDIKSSLSGLTVLKSTNSQFWGFLRDEYTTLKETWDRILSTDVDATWQWKNFSGLQEVRSHVPKFDATWATAREVTLKTFAEDNSASVQATMYKMAEQILARQQLIETVEYSLPNKHYFEIDLSWHKGLQNTGKNAEVFAPQSDPNGLIKCTVGRSSLKSKL.

Ser2 is subject to N-acetylserine. Active-site charge relay system residues include Lys11 and Thr58. The 5-hydroxyisourate site is built by Thr58, Asp59, Phe160, Arg177, Val228, Gln229, and Asn255. Thr58 serves as a coordination point for O2. 7 residues coordinate urate: Thr58, Asp59, Phe160, Arg177, Val228, Gln229, and Asn255. Asn255 is a binding site for O2. The active-site Charge relay system is the His257. The Microbody targeting signal signature appears at 300-302 (SKL).

The protein belongs to the uricase family. Homotetramer.

The protein localises to the peroxisome. It catalyses the reaction urate + O2 + H2O = 5-hydroxyisourate + H2O2. It functions in the pathway purine metabolism; urate degradation; (S)-allantoin from urate: step 1/3. With respect to regulation, 8-Azaxanthine is one of the most potent competitive inhibitors of uricase activity. Hypoxanthine has only a small inhibitor effect, and caffeine has no effect at all. Azide not only competes with dioxygen but also competes with the substrate for its enzymatic site. Functionally, urate oxidase is a cofactorless enzyme involved in the metabolism of purines. Catalyzes, in the presence of molecular oxygen, the hydroxylation of uric acid to metastable 5-hydroxyisourate (5-HIU) which is further degraded to allantoin. The sequence is that of Uricase from Aspergillus flavus.